Consider the following 612-residue polypeptide: Glutamine--fructose-6-phosphate aminotransferase [isomerizing] (612 aa).

The active-site Nucleophile; for GATase activity is Cys-2. The region spanning 2–220 is the Glutamine amidotransferase type-2 domain; it reads CGIVGAIRAH…DGDIALLASD (219 aa). 2 consecutive SIS domains span residues 288–428 and 461–602; these read AKSV…VRGL and WAQQ…VDKP. The For Fru-6P isomerization activity role is filled by Lys-607.

In terms of assembly, homodimer.

The protein resides in the cytoplasm. It carries out the reaction D-fructose 6-phosphate + L-glutamine = D-glucosamine 6-phosphate + L-glutamate. Its function is as follows. Catalyzes the first step in hexosamine metabolism, converting fructose-6P into glucosamine-6P using glutamine as a nitrogen source. In Neisseria meningitidis serogroup A / serotype 4A (strain DSM 15465 / Z2491), this protein is Glutamine--fructose-6-phosphate aminotransferase [isomerizing].